The sequence spans 509 residues: Monocarboxylate transporter 9 (509 aa).

At 1 to 12 the chain is on the cytoplasmic side; it reads MELKKSPDGGWG. The next 12 helical transmembrane spans lie at 13–33, 53–73, 80–100, 102–122, 137–157, 164–184, 305–325, 342–362, 372–392, 398–418, 433–453, and 462–482; these read WVIV…PLAV, WVGS…SLCV, PVTI…SFAP, IYFL…LLYT, GLAL…YAAL, FYGL…ILAC, VFSA…PPSL, IMPL…LLGI, LYLY…IPFA, LALL…FPYV, GILM…VGWF, and IAFY…LLAA. At 483-509 the chain is on the cytoplasmic side; sequence LPSWDTCNKQLPKPAPTTFLYKVASNV.

Belongs to the major facilitator superfamily. Monocarboxylate porter (TC 2.A.1.13) family.

It is found in the cell membrane. It carries out the reaction creatine(in) = creatine(out). The enzyme catalyses (R)-carnitine(in) = (R)-carnitine(out). In terms of biological role, extracellular pH-and Na(+)-sensitive low-affinity creatine transporter. Also functions as a pH-independent carnitine efflux transporter. The polypeptide is Monocarboxylate transporter 9 (SLC16A9) (Pongo abelii (Sumatran orangutan)).